A 152-amino-acid chain; its full sequence is MFRGATLVNLDSKGRLSVPTRYREQLLENAAGQMVCTIDIHHPCLLLYPLPEWEIIEQKLSRLSSTNPVERRVQRLLLGHASECQMDGAGRLLIAPVLRQHAGLTKEVMLVGQFNKFELWDETTWHQQVKEDIDAEQLATGDLSERLQDLSL.

SpoVT-AbrB domains are found at residues 5–52 and 81–124; these read ATLV…PLPE and ASEC…DETT.

This sequence belongs to the MraZ family. In terms of assembly, forms oligomers.

It localises to the cytoplasm. The protein resides in the nucleoid. Its function is as follows. Negatively regulates its own expression and that of the subsequent genes in the proximal part of the division and cell wall (dcw) gene cluster. Acts by binding directly to DNA. May also regulate the expression of genes outside the dcw cluster. The polypeptide is Transcriptional regulator MraZ (Escherichia coli O127:H6 (strain E2348/69 / EPEC)).